Reading from the N-terminus, the 317-residue chain is Melanocyte-stimulating hormone receptor (317 aa).

A disordered region spans residues 1–23; it reads MSGQGPQRRLLGSPNATSPTTPH. Residues 1 to 37 lie on the Extracellular side of the membrane; the sequence is MSGQGPQRRLLGSPNATSPTTPHFKLAANQTGPRCLE. N29 is a glycosylation site (N-linked (GlcNAc...) asparagine). A helical membrane pass occupies residues 38-63; that stretch reads VSIPNGLFLSLGLVSVVENVLVVAAI. Residues 64–72 lie on the Cytoplasmic side of the membrane; the sequence is AKNRNLHSP. Residues 73 to 93 form a helical membrane-spanning segment; the sequence is MYYFIGCLAVSDLLVSVTNVL. Residues 94-118 are Extracellular-facing; it reads ETAVMLLVEAGALAAQAAVVQQLDD. Residues 119 to 140 form a helical membrane-spanning segment; sequence IIDVLICGSMVSSLCFLGAIAV. The Cytoplasmic segment spans residues 141-163; the sequence is DRYLSIFYALRYHSIVTLPRAWR. A helical membrane pass occupies residues 164-183; sequence AISAIWVASVLSSTLFIAYY. Residues 184–191 lie on the Extracellular side of the membrane; that stretch reads NHTAVLLC. A helical membrane pass occupies residues 192–211; it reads LVSFFVAMLVLMAVLYVHML. The Cytoplasmic segment spans residues 212-240; the sequence is ARARQHARGIARLRKRQHSVHQGFGLKGA. Residues 241–266 form a helical membrane-spanning segment; it reads ATLTILLGIFFLCWGPFFLHLSLMVL. Residues 267-279 lie on the Extracellular side of the membrane; that stretch reads CPQHPICGCVFQN. Residues 280–300 traverse the membrane as a helical segment; that stretch reads FNLFLTLIICNSIIDPFIYAF. Residues 301 to 317 are Cytoplasmic-facing; that stretch reads RSQELRKTLQEVVLCSW. Residue C315 is the site of S-palmitoyl cysteine attachment.

Belongs to the G-protein coupled receptor 1 family. Interacts with MGRN1, but does not undergo MGRN1-mediated ubiquitination; this interaction competes with GNAS-binding and thus inhibits agonist-induced cAMP production. Interacts with OPN3; the interaction results in a decrease in MC1R-mediated cAMP signaling and ultimately a decrease in melanin production in melanocytes.

The protein localises to the cell membrane. Receptor for MSH (alpha, beta and gamma) and ACTH. The activity of this receptor is mediated by G proteins which activate adenylate cyclase. Mediates melanogenesis, the production of eumelanin (black/brown) and phaeomelanin (red/yellow), via regulation of cAMP signaling in melanocytes. The polypeptide is Melanocyte-stimulating hormone receptor (MC1R) (Vulpes vulpes (Red fox)).